Here is a 202-residue protein sequence, read N- to C-terminus: Remorin 1.4 (202 aa).

Positions 1 to 10 (MAEEEPKKVT) are enriched in basic and acidic residues. The tract at residues 1-79 (MAEEEPKKVT…VEEEKKEGSV (79 aa)) is disordered. Residues 25 to 39 (EKPAAAADVAPQEKP) are compositionally biased toward low complexity. Over residues 40–50 (VAPPPVLPSPA) the composition is skewed to pro residues. Over residues 68 to 79 (KEVEEEKKEGSV) the composition is skewed to basic and acidic residues. The stretch at 123-169 (ENNKKAAVEAELKKMEEQLEKKKAEYVEQMKNKIAQIHKEAEEKRAM) forms a coiled coil.

This sequence belongs to the remorin family.

The sequence is that of Remorin 1.4 from Arabidopsis thaliana (Mouse-ear cress).